Consider the following 193-residue polypeptide: Nucleoside triphosphate pyrophosphatase (193 aa).

Asp-70 functions as the Proton acceptor in the catalytic mechanism.

Belongs to the Maf family. The cofactor is a divalent metal cation.

It is found in the cytoplasm. The enzyme catalyses a ribonucleoside 5'-triphosphate + H2O = a ribonucleoside 5'-phosphate + diphosphate + H(+). It carries out the reaction a 2'-deoxyribonucleoside 5'-triphosphate + H2O = a 2'-deoxyribonucleoside 5'-phosphate + diphosphate + H(+). Functionally, nucleoside triphosphate pyrophosphatase. May have a dual role in cell division arrest and in preventing the incorporation of modified nucleotides into cellular nucleic acids. The chain is Nucleoside triphosphate pyrophosphatase from Anaplasma phagocytophilum (strain HZ).